Here is a 301-residue protein sequence, read N- to C-terminus: Homoserine O-acetyltransferase (301 aa).

Cys142 (acyl-thioester intermediate) is an active-site residue. Substrate is bound by residues Lys163 and Ser192. The active-site Proton acceptor is His235. The active site involves Glu237. Substrate is bound at residue Arg249.

Belongs to the MetA family.

It localises to the cytoplasm. The catalysed reaction is L-homoserine + acetyl-CoA = O-acetyl-L-homoserine + CoA. Its pathway is amino-acid biosynthesis; L-methionine biosynthesis via de novo pathway; O-acetyl-L-homoserine from L-homoserine: step 1/1. In terms of biological role, transfers an acetyl group from acetyl-CoA to L-homoserine, forming acetyl-L-homoserine. The protein is Homoserine O-acetyltransferase of Bacillus cereus (strain 03BB102).